The primary structure comprises 237 residues: Cytosolic-abundant heat soluble protein 86272 (237 aa).

Residues Phe-96–Arg-125 form a disordered region. Residues Arg-111–Arg-125 are compositionally biased toward basic and acidic residues. Positions Lys-115–Ala-193 form a coiled coil. CAHS motif stretches follow at residues Tyr-124–Gln-142 and Gln-161–Glu-179. The segment covering Ala-204–Ser-215 has biased composition (low complexity). Residues Ala-204 to Phe-237 form a disordered region. Residues Glu-216 to Phe-237 are compositionally biased toward basic and acidic residues.

Belongs to the Cytosolic-abundant heat soluble protein (CAHS) family.

It is found in the cytoplasm. CAHS proteins are cytosolic heat soluble proteins that seem to contribute to the anhydrobiosis in tardigrades, but their specific mechanisms are yet to be identified. It is possible that protection during anhydrobiosis might occur via the stabilization of vitrifying small molecules such as sugars, but not via the direct glass transition of CAHS proteins themselves. This is Cytosolic-abundant heat soluble protein 86272 from Hypsibius exemplaris (Freshwater tardigrade).